Consider the following 221-residue polypeptide: 2-amino-5-formylamino-6-ribosylaminopyrimidin-4(3H)-one 5'-monophosphate deformylase (221 aa).

Positions 29, 31, 40, and 108 each coordinate Fe cation.

The protein belongs to the creatininase superfamily. FAPy deformylase family. As to quaternary structure, homodimer. It depends on Fe(2+) as a cofactor. The cofactor is Zn(2+).

It carries out the reaction 2-amino-5-formylamino-6-(5-phospho-D-ribosylamino)pyrimidin-4(3H)-one + H2O = 2,5-diamino-6-(1-D-ribosylamino)pyrimidin-4(3H)-one 5'-phosphate + formate + H(+). Its pathway is cofactor biosynthesis; coenzyme F420 biosynthesis. It participates in cofactor biosynthesis; riboflavin biosynthesis. Functionally, catalyzes the hydrolysis of the formamide of 2-amino-5-formylamino-6-ribosylamino-4(3H)-pyrimidinone 5'-monophosphate (FAPy) to form 2,5-diamino-6-ribosylamino-4(3H)-pyrimidinone 5'-phosphate (APy). The protein is 2-amino-5-formylamino-6-ribosylaminopyrimidin-4(3H)-one 5'-monophosphate deformylase of Methanococcus maripaludis (strain C7 / ATCC BAA-1331).